The chain runs to 201 residues: 3-isopropylmalate dehydratase small subunit (201 aa).

Belongs to the LeuD family. LeuD type 1 subfamily. In terms of assembly, heterodimer of LeuC and LeuD.

The enzyme catalyses (2R,3S)-3-isopropylmalate = (2S)-2-isopropylmalate. It participates in amino-acid biosynthesis; L-leucine biosynthesis; L-leucine from 3-methyl-2-oxobutanoate: step 2/4. In terms of biological role, catalyzes the isomerization between 2-isopropylmalate and 3-isopropylmalate, via the formation of 2-isopropylmaleate. The sequence is that of 3-isopropylmalate dehydratase small subunit from Paramagnetospirillum magneticum (strain ATCC 700264 / AMB-1) (Magnetospirillum magneticum).